A 324-amino-acid polypeptide reads, in one-letter code: Dermonecrotic toxin Hl-PLD1 (324 aa).

The first 35 residues, 1–35 (MAHCYYNSKRGCNRVMKTVALVVLISTVMVEESRG), serve as a signal peptide directing secretion. The active site involves His-50. Residues Glu-70 and Asp-72 each contribute to the Mg(2+) site. His-86 (nucleophile) is an active-site residue. 2 cysteine pairs are disulfide-bonded: Cys-90-Cys-96 and Cys-92-Cys-236. Asp-130 lines the Mg(2+) pocket.

This sequence belongs to the arthropod phospholipase D family. Class II subfamily. Mg(2+) serves as cofactor. In terms of tissue distribution, expressed by the venom gland.

The protein localises to the secreted. The catalysed reaction is an N-(acyl)-sphingosylphosphocholine = an N-(acyl)-sphingosyl-1,3-cyclic phosphate + choline. The enzyme catalyses an N-(acyl)-sphingosylphosphoethanolamine = an N-(acyl)-sphingosyl-1,3-cyclic phosphate + ethanolamine. It carries out the reaction a 1-acyl-sn-glycero-3-phosphocholine = a 1-acyl-sn-glycero-2,3-cyclic phosphate + choline. It catalyses the reaction a 1-acyl-sn-glycero-3-phosphoethanolamine = a 1-acyl-sn-glycero-2,3-cyclic phosphate + ethanolamine. Dermonecrotic toxins cleave the phosphodiester linkage between the phosphate and headgroup of certain phospholipids (sphingolipid and lysolipid substrates), forming an alcohol (often choline) and a cyclic phosphate. This toxin acts on sphingomyelin (SM) with a high activity. It may also act on ceramide phosphoethanolamine (CPE), lysophosphatidylcholine (LPC) and lysophosphatidylethanolamine (LPE), but not on lysophosphatidylserine (LPS), and lysophosphatidylglycerol (LPG). It acts by transphosphatidylation, releasing exclusively cyclic phosphate products as second products. In vivo, shows dermonecrotic activity when intradermally injected into rabbit skin and is lethal to mice. Induces increased vascular permeability, edema, inflammatory response, and platelet aggregation. Does not show hemolytic activity (at up to 50 ug). The sequence is that of Dermonecrotic toxin Hl-PLD1 from Hemiscorpius lepturus (Scorpion).